The chain runs to 311 residues: Homeobox protein Hox-B1a (311 aa).

Residues 217–276 constitute a DNA-binding region (homeobox); sequence QNTIRTNFTTKQLTELEKEFHFSKYLTRARRVEIAATLELNETQVKIWFQNRRMKQKKRE. The disordered stretch occupies residues 267-311; that stretch reads NRRMKQKKREKEGLAPASSTSSKDLEDQSDHSTSTSPEASPSPDS. The segment covering 298-311 has biased composition (low complexity); it reads STSTSPEASPSPDS.

This sequence belongs to the Antp homeobox family. Labial subfamily.

It is found in the nucleus. Functionally, sequence-specific transcription factor which is part of a developmental regulatory system that provides cells with specific positional identities on the anterior-posterior axis. This is Homeobox protein Hox-B1a (hoxb1a) from Danio rerio (Zebrafish).